The primary structure comprises 192 residues: Protein GrpE (192 aa).

Residues 1–34 (MSSKEQKTPNEQVSEEMENTAEQQVEATQETGEC) form a disordered region. Polar residues predominate over residues 20 to 31 (TAEQQVEATQET).

The protein belongs to the GrpE family. In terms of assembly, homodimer.

It is found in the cytoplasm. Functionally, participates actively in the response to hyperosmotic and heat shock by preventing the aggregation of stress-denatured proteins, in association with DnaK and GrpE. It is the nucleotide exchange factor for DnaK and may function as a thermosensor. Unfolded proteins bind initially to DnaJ; upon interaction with the DnaJ-bound protein, DnaK hydrolyzes its bound ATP, resulting in the formation of a stable complex. GrpE releases ADP from DnaK; ATP binding to DnaK triggers the release of the substrate protein, thus completing the reaction cycle. Several rounds of ATP-dependent interactions between DnaJ, DnaK and GrpE are required for fully efficient folding. The chain is Protein GrpE from Yersinia pestis.